The following is a 365-amino-acid chain: Coxsackievirus and adenovirus receptor homolog (365 aa).

The N-terminal stretch at 1–19 (MALLLCFVLLCGVADFTSS) is a signal peptide. Ig-like C2-type domains follow at residues 20–136 (LSIT…FLLT) and 141–228 (PSGT…LRLD). The Extracellular portion of the chain corresponds to 20-238 (LSITTPEQRI…VVPPSNRAGT (219 aa)). Intrachain disulfides connect C41-C120, C146-C223, and C162-C212. The N-linked (GlcNAc...) asparagine glycan is linked to N106. Residues 239–259 (IAGAVIGTLLALVLIGAILFC) form a helical membrane-spanning segment. S-palmitoyl cysteine attachment occurs at residues C259 and C260. The Cytoplasmic segment spans residues 260–365 (CHKKRREEKY…PAQSKDGSIV (106 aa)). The segment covering 269–282 (YEKEVHHDIREDVP) has biased composition (basic and acidic residues). The tract at residues 269-315 (YEKEVHHDIREDVPPPKSRTSTARSYIGSNHSSLGSMSPSNMEGYSK) is disordered. Residues 286-315 (SRTSTARSYIGSNHSSLGSMSPSNMEGYSK) are compositionally biased toward polar residues. A phosphoserine mark is found at S297, S304, S306, S323, S332, and S363. A PDZ-binding motif is present at residues 360–365 (KDGSIV).

Monomer. May form homodimer. Interacts with LNX, MAGI1, DLG4, PRKCABP, TJP1 and CTNNB1. Interacts with MPDZ; recruits MPDZ to intercellular contact sites. Interacts with JAML (homodimeric form). N-glycosylated. In terms of processing, palmitoylated on Cys-259 and/or Cys-260; required for proper localization to the plasma membrane. In terms of tissue distribution, expressed in heart, brain, spleen, lung, liver, muscle, kidney, testis, spleen and skeletal muscle.

The protein localises to the cell membrane. The protein resides in the basolateral cell membrane. It localises to the cell junction. Its subcellular location is the tight junction. It is found in the adherens junction. In terms of biological role, component of the epithelial apical junction complex that may function as a homophilic cell adhesion molecule and is essential for tight junction integrity. Also involved in transepithelial migration of leukocytes through adhesive interactions with JAML a transmembrane protein of the plasma membrane of leukocytes. The interaction between both receptors also mediates the activation of gamma-delta T-cells, a subpopulation of T-cells residing in epithelia and involved in tissue homeostasis and repair. Upon epithelial CXADR-binding, JAML induces downstream cell signaling events in gamma-delta T-cells through PI3-kinase and MAP kinases. It results in proliferation and production of cytokines and growth factors by T-cells that in turn stimulate epithelial tissues repair. The sequence is that of Coxsackievirus and adenovirus receptor homolog (Cxadr) from Rattus norvegicus (Rat).